Consider the following 224-residue polypeptide: Phosphoribosylformylglycinamidine synthase subunit PurQ (224 aa).

Residues 4–224 (RIGIITFPGT…YSVLDGVLAG (221 aa)) enclose the Glutamine amidotransferase type-1 domain. Catalysis depends on C87, which acts as the Nucleophile. Catalysis depends on residues H195 and E197.

Part of the FGAM synthase complex composed of 1 PurL, 1 PurQ and 2 PurS subunits.

The protein resides in the cytoplasm. It carries out the reaction N(2)-formyl-N(1)-(5-phospho-beta-D-ribosyl)glycinamide + L-glutamine + ATP + H2O = 2-formamido-N(1)-(5-O-phospho-beta-D-ribosyl)acetamidine + L-glutamate + ADP + phosphate + H(+). It catalyses the reaction L-glutamine + H2O = L-glutamate + NH4(+). It functions in the pathway purine metabolism; IMP biosynthesis via de novo pathway; 5-amino-1-(5-phospho-D-ribosyl)imidazole from N(2)-formyl-N(1)-(5-phospho-D-ribosyl)glycinamide: step 1/2. Its function is as follows. Part of the phosphoribosylformylglycinamidine synthase complex involved in the purines biosynthetic pathway. Catalyzes the ATP-dependent conversion of formylglycinamide ribonucleotide (FGAR) and glutamine to yield formylglycinamidine ribonucleotide (FGAM) and glutamate. The FGAM synthase complex is composed of three subunits. PurQ produces an ammonia molecule by converting glutamine to glutamate. PurL transfers the ammonia molecule to FGAR to form FGAM in an ATP-dependent manner. PurS interacts with PurQ and PurL and is thought to assist in the transfer of the ammonia molecule from PurQ to PurL. This chain is Phosphoribosylformylglycinamidine synthase subunit PurQ, found in Mycolicibacterium paratuberculosis (strain ATCC BAA-968 / K-10) (Mycobacterium paratuberculosis).